A 369-amino-acid chain; its full sequence is Septin-5 (369 aa).

The residue at position 13 (T13) is a Phosphothreonine. Residues K41–Q314 enclose the Septin-type G domain. Residues G51–S58 form a G1 motif region. GTP-binding positions include G51–S58, T85, and G111. Residues D108 to G111 form a G3 motif region. R168 carries the post-translational modification Omega-N-methylarginine. Positions A189–D192 are G4 motif. A GTP-binding site is contributed by K190 to E198. Position 225 is a phosphoserine (S225). The GTP site is built by G248 and R263. S327 is subject to Phosphoserine. At T336 the chain carries Phosphothreonine. Residues D338–Q369 are a coiled coil.

It belongs to the TRAFAC class TrmE-Era-EngA-EngB-Septin-like GTPase superfamily. Septin GTPase family. In terms of assembly, septins polymerize into heterooligomeric protein complexes that form filaments, and can associate with cellular membranes, actin filaments and microtubules. GTPase activity is required for filament formation. Interacts with SEPTIN2 and SEPTIN5. Interaction with SEPTIN4 not detected. In platelets, associated with a complex containing STX4. Interacts with PRKN; this interaction leads to SEPTIN5 ubiquitination and degradation. Interacts with DYRK1A. Interacts with STX1A; in the cerebellar cortex. In terms of processing, phosphorylated by DYRK1A.

It is found in the cytoplasm. Its subcellular location is the cytoskeleton. In terms of biological role, filament-forming cytoskeletal GTPase. Involved in cytokinesis (Potential). May play a role in platelet secretion. The sequence is that of Septin-5 from Mus musculus (Mouse).